The following is a 283-amino-acid chain: Elongation factor Ts (283 aa).

The segment at 82 to 85 (TDFV) is involved in Mg(2+) ion dislocation from EF-Tu.

The protein belongs to the EF-Ts family.

The protein resides in the cytoplasm. Associates with the EF-Tu.GDP complex and induces the exchange of GDP to GTP. It remains bound to the aminoacyl-tRNA.EF-Tu.GTP complex up to the GTP hydrolysis stage on the ribosome. The chain is Elongation factor Ts from Photorhabdus laumondii subsp. laumondii (strain DSM 15139 / CIP 105565 / TT01) (Photorhabdus luminescens subsp. laumondii).